Here is a 43-residue protein sequence, read N- to C-terminus: Cytochrome b559 subunit beta (43 aa).

The helical transmembrane segment at 18–34 threads the bilayer; the sequence is WLAIHGLAIPTVFFLGG. A heme-binding site is contributed by histidine 22.

The protein belongs to the PsbE/PsbF family. Heterodimer of an alpha subunit and a beta subunit. PSII is composed of 1 copy each of membrane proteins PsbA, PsbB, PsbC, PsbD, PsbE, PsbF, PsbH, PsbI, PsbJ, PsbK, PsbL, PsbM, PsbT, PsbX, PsbY, PsbZ, Psb30/Ycf12, at least 3 peripheral proteins of the oxygen-evolving complex and a large number of cofactors. It forms dimeric complexes. It depends on heme b as a cofactor.

It is found in the plastid. Its subcellular location is the chloroplast thylakoid membrane. In terms of biological role, this b-type cytochrome is tightly associated with the reaction center of photosystem II (PSII). PSII is a light-driven water:plastoquinone oxidoreductase that uses light energy to abstract electrons from H(2)O, generating O(2) and a proton gradient subsequently used for ATP formation. It consists of a core antenna complex that captures photons, and an electron transfer chain that converts photonic excitation into a charge separation. The sequence is that of Cytochrome b559 subunit beta from Phaeodactylum tricornutum (strain CCAP 1055/1).